A 637-amino-acid chain; its full sequence is Biosynthetic arginine decarboxylase (637 aa).

Residue Lys101 is modified to N6-(pyridoxal phosphate)lysine. 286 to 296 contacts substrate; sequence FDVGGGLAVDY.

This sequence belongs to the Orn/Lys/Arg decarboxylase class-II family. SpeA subfamily. The cofactor is Mg(2+). Pyridoxal 5'-phosphate serves as cofactor.

It carries out the reaction L-arginine + H(+) = agmatine + CO2. The protein operates within amine and polyamine biosynthesis; agmatine biosynthesis; agmatine from L-arginine: step 1/1. Functionally, catalyzes the biosynthesis of agmatine from arginine. The polypeptide is Biosynthetic arginine decarboxylase (Shewanella loihica (strain ATCC BAA-1088 / PV-4)).